The sequence spans 105 residues: Small ribosomal subunit protein uS10 (105 aa).

It belongs to the universal ribosomal protein uS10 family. Part of the 30S ribosomal subunit.

Its function is as follows. Involved in the binding of tRNA to the ribosomes. This Acaryochloris marina (strain MBIC 11017) protein is Small ribosomal subunit protein uS10.